Consider the following 35-residue polypeptide: Probable endonuclease 4 (35 aa).

Position 15 (Glu-15) interacts with Zn(2+).

This sequence belongs to the AP endonuclease 2 family. The cofactor is Zn(2+).

It catalyses the reaction Endonucleolytic cleavage to 5'-phosphooligonucleotide end-products.. Endonuclease IV plays a role in DNA repair. It cleaves phosphodiester bonds at apurinic or apyrimidinic (AP) sites, generating a 3'-hydroxyl group and a 5'-terminal sugar phosphate. The sequence is that of Probable endonuclease 4 (nfo) from Yersinia enterocolitica.